Consider the following 200-residue polypeptide: Small ribosomal subunit protein uS4 (200 aa).

The tract at residues 22 to 42 (TGKELEKRPYAPGPHGPNQRK) is disordered. The S4 RNA-binding domain occupies 92 to 152 (ARLDNLVYRM…EKSNNLVVVK (61 aa)).

Belongs to the universal ribosomal protein uS4 family. Part of the 30S ribosomal subunit. Contacts protein S5. The interaction surface between S4 and S5 is involved in control of translational fidelity.

In terms of biological role, one of the primary rRNA binding proteins, it binds directly to 16S rRNA where it nucleates assembly of the body of the 30S subunit. Its function is as follows. With S5 and S12 plays an important role in translational accuracy. In Bacillus cereus (strain Q1), this protein is Small ribosomal subunit protein uS4.